The sequence spans 82 residues: Neuromacin (82 aa).

A signal peptide spans 1–23 (MALLNKLLCFALVFMIFGEFVTP). 4 cysteine pairs are disulfide-bonded: Cys-25/Cys-32, Cys-47/Cys-51, Cys-61/Cys-69, and Cys-79/Cys-81.

Belongs to the macin family.

Its subcellular location is the secreted. This Hirudo medicinalis (Medicinal leech) protein is Neuromacin.